A 325-amino-acid chain; its full sequence is Heat-inducible transcription repressor HrcA (325 aa).

The protein belongs to the HrcA family.

In terms of biological role, negative regulator of class I heat shock genes (grpE-dnaK-dnaJ and groELS operons). Prevents heat-shock induction of these operons. This Staphylococcus aureus (strain MRSA252) protein is Heat-inducible transcription repressor HrcA.